The chain runs to 1193 residues: Protein diaphanous homolog 3 (1193 aa).

A compositionally biased stretch (basic residues) spans 1 to 10 (MERHQPRLHH). The tract at residues 1-57 (MERHQPRLHHPAQGSAAGTPYPSSASLRGCRESKMPRRKGPQHPPPPSGPEEPGEKR) is disordered. Serine 26 bears the Phosphoserine mark. The Nuclear localization signal signature appears at 36 to 60 (PRRKGPQHPPPPSGPEEPGEKRPKF). A Phosphothreonine modification is found at threonine 68. 2 positions are modified to phosphoserine: serine 77 and serine 175. Residues 114–476 (PKPLSENELL…QIVLHRDGMD (363 aa)) form the GBD/FH3 domain. Positions 497-554 (IDQAKLEEFEEKASELYKKFEKEFTDHQETQAELQKKEAKINELQAELQAFKSQFGAL) form a coiled coil. Residues 558-622 (CNIPLPPSKE…PPPLGFLGGQ (65 aa)) form a disordered region. The region spanning 561–631 (PLPPSKEGGT…QNSPPLPILP (71 aa)) is the FH1 domain. Residues 575 to 600 (LPPPPPLPSGGGVPPPPPPPPPPPLP) are compositionally biased toward pro residues. At serine 624 the chain carries Phosphoserine. Positions 636 to 1034 (PKKEFKPEIS…EKRVRIAKEL (399 aa)) constitute an FH2 domain. Residues 1013–1056 (KENIKKREAEEKEKRVRIAKELAERERLERQQKKKRLLEMKTEG) adopt a coiled-coil conformation. The 31-residue stretch at 1057-1087 (DETGVMDNLLEALQSGAAFRDRRKRTPMPKD) folds into the DAD domain. Phosphoserine is present on residues serine 1093 and serine 1179. The short motif at 1184-1193 (EALLARLRAL) is the Nuclear export signal element.

The protein belongs to the formin homology family. Diaphanous subfamily. Ubiquitinated.

It is found in the cytoplasm. The protein resides in the nucleus. In terms of biological role, actin nucleation and elongation factor required for the assembly of F-actin structures, such as actin cables and stress fibers. Required for cytokinesis, stress fiber formation and transcriptional activation of the serum response factor. Binds to GTP-bound form of Rho and to profilin: acts in a Rho-dependent manner to recruit profilin to the membrane, where it promotes actin polymerization. DFR proteins couple Rho and Src tyrosine kinase during signaling and the regulation of actin dynamics. Also acts as an actin nucleation and elongation factor in the nucleus by promoting nuclear actin polymerization inside the nucleus to drive serum-dependent SRF-MRTFA activity. The protein is Protein diaphanous homolog 3 (DIAPH3) of Homo sapiens (Human).